The sequence spans 55 residues: MPQLLPTPWFTIFIYAWMVLLAVIPLKILSYVYPNHNYLRGLQKPSEHSWFWPWS.

A helical membrane pass occupies residues 4-24 (LLPTPWFTIFIYAWMVLLAVI).

This sequence belongs to the ATPase protein 8 family. As to quaternary structure, component of the ATP synthase complex composed at least of ATP5F1A/subunit alpha, ATP5F1B/subunit beta, ATP5MC1/subunit c (homooctomer), MT-ATP6/subunit a, MT-ATP8/subunit 8, ATP5ME/subunit e, ATP5MF/subunit f, ATP5MG/subunit g, ATP5MK/subunit k, ATP5MJ/subunit j, ATP5F1C/subunit gamma, ATP5F1D/subunit delta, ATP5F1E/subunit epsilon, ATP5PF/subunit F6, ATP5PB/subunit b, ATP5PD/subunit d, ATP5PO/subunit OSCP. ATP synthase complex consists of a soluble F(1) head domain (subunits alpha(3) and beta(3)) - the catalytic core - and a membrane F(0) domain - the membrane proton channel (subunits c, a, 8, e, f, g, k and j). These two domains are linked by a central stalk (subunits gamma, delta, and epsilon) rotating inside the F1 region and a stationary peripheral stalk (subunits F6, b, d, and OSCP).

It is found in the mitochondrion membrane. In terms of biological role, subunit 8, of the mitochondrial membrane ATP synthase complex (F(1)F(0) ATP synthase or Complex V) that produces ATP from ADP in the presence of a proton gradient across the membrane which is generated by electron transport complexes of the respiratory chain. ATP synthase complex consist of a soluble F(1) head domain - the catalytic core - and a membrane F(1) domain - the membrane proton channel. These two domains are linked by a central stalk rotating inside the F(1) region and a stationary peripheral stalk. During catalysis, ATP synthesis in the catalytic domain of F(1) is coupled via a rotary mechanism of the central stalk subunits to proton translocation. In vivo, can only synthesize ATP although its ATP hydrolase activity can be activated artificially in vitro. Part of the complex F(0) domain. This is ATP synthase F(0) complex subunit 8 from Dicentrarchus labrax (European seabass).